Reading from the N-terminus, the 234-residue chain is Geranylgeranylglyceryl phosphate synthase (234 aa).

Mg(2+)-binding residues include D24 and S52. Residues 172-178, 203-204, and 225-226 contribute to the sn-glycerol 1-phosphate site; these read YLEAGSG, GG, and GT.

Belongs to the GGGP/HepGP synthase family. Group II subfamily. Homodimer. Mg(2+) is required as a cofactor.

The catalysed reaction is sn-glycerol 1-phosphate + (2E,6E,10E)-geranylgeranyl diphosphate = sn-3-O-(geranylgeranyl)glycerol 1-phosphate + diphosphate. Prenyltransferase that catalyzes the transfer of the geranylgeranyl moiety of geranylgeranyl diphosphate (GGPP) to the C3 hydroxyl of sn-glycerol-1-phosphate (G1P). The protein is Geranylgeranylglyceryl phosphate synthase of Zunongwangia profunda (strain DSM 18752 / CCTCC AB 206139 / SM-A87) (Wangia profunda).